We begin with the raw amino-acid sequence, 197 residues long: Putative NADH dehydrogenase/NAD(P)H nitroreductase Lcho_1290 (197 aa).

It belongs to the nitroreductase family. HadB/RutE subfamily. Requires FMN as cofactor.

The polypeptide is Putative NADH dehydrogenase/NAD(P)H nitroreductase Lcho_1290 (Leptothrix cholodnii (strain ATCC 51168 / LMG 8142 / SP-6) (Leptothrix discophora (strain SP-6))).